We begin with the raw amino-acid sequence, 198 residues long: HTH-type transcriptional regulator BetI (198 aa).

An HTH tetR-type domain is found at 8–68 (PIRRQQLIEA…ATMRYLIRHL (61 aa)). Residues 31 to 50 (SIAQIAKRAGVSNGIISHYF) constitute a DNA-binding region (H-T-H motif).

It functions in the pathway amine and polyamine biosynthesis; betaine biosynthesis via choline pathway [regulation]. Functionally, repressor involved in the biosynthesis of the osmoprotectant glycine betaine. It represses transcription of the choline transporter BetT and the genes of BetAB involved in the synthesis of glycine betaine. The protein is HTH-type transcriptional regulator BetI of Yersinia pseudotuberculosis serotype O:1b (strain IP 31758).